A 320-amino-acid chain; its full sequence is Aminoacyl tRNA synthase complex-interacting multifunctional protein 2 (320 aa).

A Phosphoserine modification is found at Ser-36. The tract at residues 82–162 is interaction with PRKN; that stretch reads TPDADLDVTN…HTHSSVKNVP (81 aa). An interaction with TP53 region spans residues 162 to 225; sequence PENLVKCFGE…FLFSLFGQKH (64 aa). One can recognise a GST C-terminal domain in the interval 220–317; it reads LFGQKHNAVT…NLAPFSTALQ (98 aa).

In terms of assembly, part of the multisynthetase complex (MSC), a multisubunit complex that groups tRNA ligases for Arg (RARS1), Asp (DARS1), Gln (QARS1), Ile (IARS1), Leu (LARS1), Lys (KARS1), Met (MARS1) the bifunctional ligase for Glu and Pro (EPRS1) and the auxiliary subunits AIMP1/p43, AIMP2/p38 and EEF1E1/p18. Interacts (via N-terminus) with KARS1. Interacts with EPRS1. Forms a linear complex that contains MARS1, EEF1E1, EPRS1 and AIMP2 that is at the core of the multisubunit complex. Binds FUBP1 (via C-terminus). Interacts in both its unphosphorylated and phosphorylated forms with p53/TP53 (via N-terminus) in the nucleus following UV irradiation. Interacts (via N-terminus) with PRKN/parkin (via first RING-type domain). Interacts with TARS3. Phosphorylated on serine residues in response to UV irradiation. In terms of processing, ubiquitinated by PRKN, leading to its degradation by the proteasome.

The protein resides in the cytoplasm. The protein localises to the cytosol. Its subcellular location is the nucleus. In terms of biological role, required for assembly and stability of the aminoacyl-tRNA synthase complex. Mediates ubiquitination and degradation of FUBP1, a transcriptional activator of MYC, leading to MYC down-regulation which is required for aveolar type II cell differentiation. Blocks MDM2-mediated ubiquitination and degradation of p53/TP53. Functions as a proapoptotic factor. The protein is Aminoacyl tRNA synthase complex-interacting multifunctional protein 2 (Aimp2) of Mus musculus (Mouse).